We begin with the raw amino-acid sequence, 125 residues long: Inner membrane protein YbaN (125 aa).

The Cytoplasmic segment spans residues 1 to 6 (MQRIIL). The chain crosses the membrane as a helical span at residues 7–26 (IIIGWLAVVLGTLGVVLPVL). The Periplasmic segment spans residues 27–45 (PTTPFILLAAWCFARSSPR). Residues 46 to 63 (FHAWLLYRSWFGSYLRFW) form a helical membrane-spanning segment. Over 64–74 (QKHHAMPRGVK) the chain is Cytoplasmic. A helical membrane pass occupies residues 75-92 (PRAILLILLTFAISLWFV). Over 93–95 (QMP) the chain is Periplasmic. Residues 96 to 118 (WVRIMLLVILACLLFYMWRIPVI) form a helical membrane-spanning segment. At 119-125 (DEKQEKH) the chain is on the cytoplasmic side.

Its subcellular location is the cell inner membrane. This chain is Inner membrane protein YbaN (ybaN), found in Escherichia coli O157:H7.